The chain runs to 1178 residues: MFELNNFDALQIGLASPEKIREWSRGEVKKPETINYRTLKPERDGLFCERIFGPMKDWECHCGKYKRIRYKGIVCDRCGVEVTKAKVRRERMGHIELAAPVSHIWYFKGIPSRMGLILDMSPRALEKVLYFASYVVLDPKETPLLKKQLLNEKEYRESIDKYGDDSFVAAMGAEAVKTLLDEIDLEQSSIELKEELKTSTGQKKIRIIRRLEVVESFRKSGNRPDWMVIDVIPVIPPDLRPMVQLDGGRFATSDLNDLYRRVINRNNRLKKLLDLGAPDIIVRNEKRMLQEAVDALIDNGRRGRPVTGPGNRPLKSLSDMLKGKQGRFRQNLLGKRVDYSGRSVIVVGPELKMYQCGLPKEMALELFKPFVMKKLVQNGLAHNIKSAKRMVERVQPQVWDVLEEVISDHPVLLNRAPTLHRLGIQAFQPVLVEGRAIKLHPLVCTAYNADFDGDQMAVHVPLSVEAQAEARFLMLAAHNILKPSDGKPVSVPTQDMVLGSYYLTMDKDGVKGEGKVFSCPEEVLMAYQCKAVDIHAKIKVRLKRVVDGETIEGIIETTPGKIIFNESIPQDLGYIDRTIPENKLKLEVDFLVSKKTLGGIITRCYMKHGATKTSIMLDKIKAKGYHYSTIGAITISTSDMVVPEAKRELLENTEKQVEKIQKMYRRGFISEEERYEKVIDLWTKTTEDVANALMGSLDSFNPIYMMADSGARGSKSQIKQLAGMRGLMANPSGKIIELPIKASFREGLDVLEYFISTHGARKGNADTALKTADSGYLTRRLVDVSQDVIVRQEDCGTEEGYEVSEIKEGNEVIEPLVERLSGRYPSEDIIHPTTGEVIVKRNTYMNEDIAKKVSDAGIKKVKIRSVFTCKSKHGVCARCYGMNMATSQKIHIGEAVGIVAAQSIGEPGTQLTMRTFHTGGVAGADITQGLPRVEELFEARKPKGLAIVSEVSGTVKMEETKKKRTIIVVTDDGEEVSYDIPFGSRIKVKNGDIIAAGDEITEGSINPHDILRIKGVDGVKNYLLSEVQKVYRLQGVDINDKHLEVVIRQMTRKIKIEDSGDTELLPGTMIDVFDFEEANKEILEKGGEPAVGRIALLGITKAALATDSFLSAASFQETTRVLTDAAIKGKIDPLLGLKENVIIGKLIPAGTGMTRYRSIQINTDDENIEEDSIDSIEV.

Positions 60, 62, 75, and 78 each coordinate Zn(2+). 3 residues coordinate Mg(2+): D450, D452, and D454. 4 residues coordinate Zn(2+): C795, C869, C876, and C879.

It belongs to the RNA polymerase beta' chain family. As to quaternary structure, the RNAP catalytic core consists of 2 alpha, 1 beta, 1 beta' and 1 omega subunit. When a sigma factor is associated with the core the holoenzyme is formed, which can initiate transcription. It depends on Mg(2+) as a cofactor. Zn(2+) serves as cofactor.

It catalyses the reaction RNA(n) + a ribonucleoside 5'-triphosphate = RNA(n+1) + diphosphate. Its function is as follows. DNA-dependent RNA polymerase catalyzes the transcription of DNA into RNA using the four ribonucleoside triphosphates as substrates. The polypeptide is DNA-directed RNA polymerase subunit beta' (Clostridium botulinum (strain Loch Maree / Type A3)).